Reading from the N-terminus, the 316-residue chain is Acetaldehyde dehydrogenase (316 aa).

11–14 (SGNI) serves as a coordination point for NAD(+). Cys131 acts as the Acyl-thioester intermediate in catalysis. Residues 162 to 170 (SAGPGTRAN) and Asn289 each bind NAD(+).

Belongs to the acetaldehyde dehydrogenase family. In terms of assembly, interacts with MhpE.

The enzyme catalyses acetaldehyde + NAD(+) + CoA = acetyl-CoA + NADH + H(+). It functions in the pathway aromatic compound metabolism; 3-phenylpropanoate degradation. Its function is as follows. Catalyzes the conversion of acetaldehyde to acetyl-CoA, using NAD(+) and coenzyme A. Is the final enzyme in the meta-cleavage pathway for the degradation of aromatic compounds. In Klebsiella pneumoniae (strain 342), this protein is Acetaldehyde dehydrogenase.